The sequence spans 332 residues: MLLKEYRICMPLTVDEYKIGQLYMISKHSHEQSDRGEGVEVVQNEPFEDPHHGNGQFTEKRVYLNSKLPSWARAVVPKIFYVTEKAWNYYPYTITEYTCSFLPKFSIHIETKYEDNKGSNDTIFDNEAKDVEREVCFIDIACDEIPERYYKESEDPKHFKSEKTGRGQLREGWRDSHQPIMCSYKLVTVKFEVWGLQTRVEQFVHKVVRDILLIGHRQAFAWVDEWYDMTMDEVREFERATQEATNKKIGIFPPAISISSIPLLPSSVRSAPSSAPSTPLSTDAPEFLSVPKDRPRKKSAPETLTLPDPEKKATLNLPGMHSSDKPCRPKSE.

Phosphoserine occurs at positions 119, 270, and 274. Residues 267 to 285 show a composition bias toward low complexity; the sequence is SVRSAPSSAPSTPLSTDAP. The tract at residues 267–332 is disordered; that stretch reads SVRSAPSSAP…SDKPCRPKSE (66 aa). The residue at position 278 (Thr-278) is a Phosphothreonine. Positions 322–332 are enriched in basic and acidic residues; that stretch reads SSDKPCRPKSE.

The protein belongs to the PtdIns transfer protein family. PI transfer class IIB subfamily. In terms of tissue distribution, ubiquitously expressed.

It is found in the cytoplasm. The enzyme catalyses a 1,2-diacyl-sn-glycero-3-phospho-(1D-myo-inositol)(in) = a 1,2-diacyl-sn-glycero-3-phospho-(1D-myo-inositol)(out). The catalysed reaction is a 1,2-diacyl-sn-glycero-3-phosphate(in) = a 1,2-diacyl-sn-glycero-3-phosphate(out). In terms of biological role, catalyzes the transfer of phosphatidylinositol (PI) and phosphatidic acid (PA) between membranes. Binds PA derived from the phospholipase D signaling pathway and among the cellular PA species, preferably binds to the C16:0/16:1 and C16:1/18:1 PA species. Catalyzes the transfer of phosphatidylinositol between membranes. In Homo sapiens (Human), this protein is Cytoplasmic phosphatidylinositol transfer protein 1 (PITPNC1).